The sequence spans 310 residues: Methionyl-tRNA formyltransferase (310 aa).

109–112 serves as a coordination point for (6S)-5,6,7,8-tetrahydrofolate; it reads SLLP.

The protein belongs to the Fmt family.

It catalyses the reaction L-methionyl-tRNA(fMet) + (6R)-10-formyltetrahydrofolate = N-formyl-L-methionyl-tRNA(fMet) + (6S)-5,6,7,8-tetrahydrofolate + H(+). Its function is as follows. Attaches a formyl group to the free amino group of methionyl-tRNA(fMet). The formyl group appears to play a dual role in the initiator identity of N-formylmethionyl-tRNA by promoting its recognition by IF2 and preventing the misappropriation of this tRNA by the elongation apparatus. This is Methionyl-tRNA formyltransferase from Chloroflexus aurantiacus (strain ATCC 29366 / DSM 635 / J-10-fl).